The primary structure comprises 194 residues: Lysozyme g (194 aa).

Residues glutamate 71 and aspartate 84 contribute to the active site.

Belongs to the glycosyl hydrolase 23 family. Expressed in intestine, liver, spleen, anterior kidney, posterior kidney, heart, gill, muscle and leukocytes.

The catalysed reaction is Hydrolysis of (1-&gt;4)-beta-linkages between N-acetylmuramic acid and N-acetyl-D-glucosamine residues in a peptidoglycan and between N-acetyl-D-glucosamine residues in chitodextrins.. Has lytic activity against M.lysodeikticus, V.alginolyticus from Epinephelus fario, V.vulnificus from culture water, A.hydrophila from soft-shell turtle, A.hydrophila from goldfish and V.parahaemolyticus, P.fluorescens and V.fluvialis from culture water. This is Lysozyme g from Epinephelus coioides (Orange-spotted grouper).